The following is a 120-amino-acid chain: Large ribosomal subunit protein uL18 (120 aa).

Belongs to the universal ribosomal protein uL18 family. Part of the 50S ribosomal subunit; part of the 5S rRNA/L5/L18/L25 subcomplex. Contacts the 5S and 23S rRNAs.

This is one of the proteins that bind and probably mediate the attachment of the 5S RNA into the large ribosomal subunit, where it forms part of the central protuberance. The sequence is that of Large ribosomal subunit protein uL18 from Gluconacetobacter diazotrophicus (strain ATCC 49037 / DSM 5601 / CCUG 37298 / CIP 103539 / LMG 7603 / PAl5).